A 102-amino-acid chain; its full sequence is Small ribosomal subunit protein bS20 (102 aa).

This sequence belongs to the bacterial ribosomal protein bS20 family.

Functionally, binds directly to 16S ribosomal RNA. The chain is Small ribosomal subunit protein bS20 from Gloeobacter violaceus (strain ATCC 29082 / PCC 7421).